A 516-amino-acid chain; its full sequence is Cytochrome P450 monooxygenase dtxS2 (516 aa).

The helical transmembrane segment at 23-43 (ILASVIVLLGLKVATILYTAF) threads the bilayer. Asn-187 carries an N-linked (GlcNAc...) asparagine glycan. The helical transmembrane segment at 229 to 249 (VLVPLLVFPYISWLLVWWLLS) threads the bilayer. Cys-458 serves as a coordination point for heme.

Belongs to the cytochrome P450 family. Heme serves as cofactor.

It localises to the membrane. It functions in the pathway secondary metabolite biosynthesis. Cytochrome P450 monooxygenase; part of the gene cluster that mediates the biosynthesis of destruxins, insecticidal cyclic hexadepsipeptides which induce flaccid paralysis and visceral muscle contraction in insects through targeting the calcium channels and vacuolar-type ATPases. The aldo-keto reductase dtxS3 converts alpha-ketoisocaproic acid from deaminated leucine into alpha-hydroxyisocaproic acid (HIC), which is the first substrate for destruxin assembly by dtxS1. L-aspartate decarboxylase dtxS4 converts aspartic acid into beta-alanine, the last substrate for the destruxin assembly line performed by dtxS1. The nonribosomal peptide synthetase dtxS1 synthesizes destruxins B and B2, whereas the cytochrome P450 monooxygenase dtxS2 is required to convert destruxin B into other destruxin derivatives, including destructins C, D, A and E. Destruxin E-diol (ED) is further produced in a non-enzymatic manner from destruxin E. Destruxins play an important role in virulence and escape from insect host immune defenses. This chain is Cytochrome P450 monooxygenase dtxS2, found in Metarhizium robertsii (strain ARSEF 23 / ATCC MYA-3075) (Metarhizium anisopliae (strain ARSEF 23)).